The chain runs to 119 residues: Anamorsin homolog (119 aa).

The interval 33-119 (LKQATKGEDC…KVKLNLTDDI (87 aa)) is disordered. [2Fe-2S] cluster is bound by residues cysteine 42, cysteine 49, cysteine 52, and cysteine 54. The segment at 42-54 (CTTRRRACKNCVC) is fe-S binding site A. [4Fe-4S] cluster is bound by residues cysteine 81, cysteine 84, cysteine 92, and cysteine 95. Short sequence motifs (cx2C motif) lie at residues 81–84 (CGNC) and 92–95 (CANC). Residues 81-95 (CGNCAKGDAFRCANC) are fe-S binding site B.

It belongs to the anamorsin family. In terms of assembly, monomer. It depends on [2Fe-2S] cluster as a cofactor. [4Fe-4S] cluster serves as cofactor.

It is found in the cytoplasm. The protein localises to the mitochondrion intermembrane space. Functionally, component of the cytosolic iron-sulfur (Fe-S) protein assembly (CIA) machinery. Required for the maturation of extramitochondrial Fe-S proteins. Part of an electron transfer chain functioning in an early step of cytosolic Fe-S biogenesis, facilitating the de novo assembly of a [4Fe-4S] cluster on the cytosolic Fe-S scaffold complex. Electrons are transferred from NADPH via a FAD- and FMN-containing diflavin oxidoreductase. Together with the diflavin oxidoreductase, also required for the assembly of the diferric tyrosyl radical cofactor of ribonucleotide reductase (RNR), probably by providing electrons for reduction during radical cofactor maturation in the catalytic small subunit. This Leishmania braziliensis protein is Anamorsin homolog.